The primary structure comprises 183 residues: Translation initiation factor IF-3 (183 aa).

Belongs to the IF-3 family. Monomer.

The protein localises to the cytoplasm. In terms of biological role, IF-3 binds to the 30S ribosomal subunit and shifts the equilibrium between 70S ribosomes and their 50S and 30S subunits in favor of the free subunits, thus enhancing the availability of 30S subunits on which protein synthesis initiation begins. In Aliivibrio salmonicida (strain LFI1238) (Vibrio salmonicida (strain LFI1238)), this protein is Translation initiation factor IF-3.